A 543-amino-acid chain; its full sequence is Hydroxylamine reductase (543 aa).

[4Fe-4S] cluster-binding residues include C5, C8, C17, and C23. H250, E274, C318, C410, C438, C463, E498, and K500 together coordinate hybrid [4Fe-2O-2S] cluster. C410 carries the post-translational modification Cysteine persulfide.

This sequence belongs to the HCP family. [4Fe-4S] cluster is required as a cofactor. The cofactor is hybrid [4Fe-2O-2S] cluster.

Its subcellular location is the cytoplasm. It carries out the reaction A + NH4(+) + H2O = hydroxylamine + AH2 + H(+). In terms of biological role, catalyzes the reduction of hydroxylamine to form NH(3) and H(2)O. The sequence is that of Hydroxylamine reductase from Petrotoga mobilis (strain DSM 10674 / SJ95).